We begin with the raw amino-acid sequence, 248 residues long: Probable transcriptional regulatory protein FTM_1203 (248 aa).

Belongs to the TACO1 family.

It is found in the cytoplasm. The sequence is that of Probable transcriptional regulatory protein FTM_1203 from Francisella tularensis subsp. mediasiatica (strain FSC147).